The following is a 168-amino-acid chain: MLEIYEVIPAQEMQNKQTQLTVELRFDERQKSRHKTQTTCGKDLGWFIERGYVLAHGEGLQSKCGEIITVVAAKESVSEVTAENTHQLMRAAYHLGNRHVPLQVDPTKLAYLHDHVLDDMVRGLGLTVTAAQAPFTPESGAYHGTTGHGGGHSHSHGHSHDHHHDHSH.

The tract at residues 137-168 is disordered; the sequence is PESGAYHGTTGHGGGHSHSHGHSHDHHHDHSH. Positions 151 to 161 are enriched in basic residues; it reads GHSHSHGHSHD.

This sequence belongs to the UreE family.

It is found in the cytoplasm. Functionally, involved in urease metallocenter assembly. Binds nickel. Probably functions as a nickel donor during metallocenter assembly. This is Urease accessory protein UreE from Saccharophagus degradans (strain 2-40 / ATCC 43961 / DSM 17024).